Reading from the N-terminus, the 110-residue chain is UPF0145 protein LMOf2365_0219 (110 aa).

The protein belongs to the UPF0145 family.

The chain is UPF0145 protein LMOf2365_0219 from Listeria monocytogenes serotype 4b (strain F2365).